The chain runs to 123 residues: Beta-2-microglobulin (123 aa).

The signal sequence occupies residues 1–21; that stretch reads MSRLFLFALLGHLCFLPYLDA. Residues 29 to 118 enclose the Ig-like C1-type domain; it reads PRVQVYSRYP…STLNEPKVVK (90 aa). The cysteines at positions 49 and 104 are disulfide-linked.

The protein belongs to the beta-2-microglobulin family. In terms of assembly, heterodimer of an alpha chain and a beta chain. Beta-2-microglobulin is the beta-chain of major histocompatibility complex class I molecules.

The protein resides in the secreted. In terms of biological role, component of the class I major histocompatibility complex (MHC). Involved in the presentation of peptide antigens to the immune system. This is Beta-2-microglobulin (B2M) from Monodelphis domestica (Gray short-tailed opossum).